Here is a 330-residue protein sequence, read N- to C-terminus: Polyprenyl transferase ausN (330 aa).

The next 5 helical transmembrane spans lie at 116–136 (AATIFTACLFVLGCSLLLFLP), 165–185 (LILINIAWAIPMAMHSLGMEP), 189–209 (ILSMLCMCVFFSAVIVMIDLV), 238–258 (AYSLFAISSLALLFGGVLGGL), and 260–280 (VPFVLFSVGGHIVGFWRFLRA).

It belongs to the UbiA prenyltransferase family. Mg(2+) is required as a cofactor.

It localises to the membrane. The enzyme catalyses 3,5-dimethylorsellinate + (2E,6E)-farnesyl diphosphate = (3R)-3-farnesyl-6-hydroxy-2,3,5-trimethyl-4-oxocyclohexa-1,5-diene-1-carboxylate + diphosphate + H(+). The protein operates within secondary metabolite biosynthesis; terpenoid biosynthesis. In terms of biological role, polyprenyl transferase; part of the gene cluster B that mediates the biosynthesis of austinol and dehydroaustinol, two fungal meroterpenoids. The first step of the pathway is the synthesis of 3,5-dimethylorsellinic acid by the polyketide synthase ausA. 3,5-dimethylorsellinic acid is then prenylated by the polyprenyl transferase ausN. Further epoxidation by the FAD-dependent monooxygenase ausM and cyclization by the probable terpene cyclase ausL lead to the formation of protoaustinoid A. Protoaustinoid A is then oxidized to spiro-lactone preaustinoid A3 by the combined action of the FAD-binding monooxygenases ausB and ausC, and the dioxygenase ausE. Acid-catalyzed keto-rearrangement and ring contraction of the tetraketide portion of preaustinoid A3 by ausJ lead to the formation of preaustinoid A4. The aldo-keto reductase ausK, with the help of ausH, is involved in the next step by transforming preaustinoid A4 into isoaustinone which is in turn hydroxylated by the P450 monooxygenase ausI to form austinolide. Finally, the cytochrome P450 monooxygenase ausG modifies austinolide to austinol. Austinol can be further modified to dehydroaustinol which forms a diffusible complex with diorcinol that initiates conidiation. Due to genetic rearrangements of the clusters and the subsequent loss of some enzymes, the end products of the Emericella nidulans austinoid biosynthesis clusters are austinol and dehydroaustinol, even if additional enzymes, such as the O-acetyltransferase ausQ and the cytochrome P450 monooxygenase ausR are still functional. The chain is Polyprenyl transferase ausN from Emericella nidulans (strain FGSC A4 / ATCC 38163 / CBS 112.46 / NRRL 194 / M139) (Aspergillus nidulans).